Consider the following 391-residue polypeptide: Pyruvate dehydrogenase E1 component subunit beta-3, chloroplastic (391 aa).

Residues 1 to 35 (MATAAAASLQYALHGAASASAKPRSAAPGRSVRVV) constitute a chloroplast transit peptide. Glu127 serves as a coordination point for thiamine diphosphate. Residues Ile180, Ala228, Ile229, and Asn233 each contribute to the K(+) site.

Tetramer of 2 alpha and 2 beta subunits. Thiamine diphosphate serves as cofactor.

Its subcellular location is the plastid. The protein resides in the chloroplast. The catalysed reaction is N(6)-[(R)-lipoyl]-L-lysyl-[protein] + pyruvate + H(+) = N(6)-[(R)-S(8)-acetyldihydrolipoyl]-L-lysyl-[protein] + CO2. In terms of biological role, the pyruvate dehydrogenase complex catalyzes the overall conversion of pyruvate to acetyl-CoA and CO(2). It contains multiple copies of three enzymatic components: pyruvate dehydrogenase (E1), dihydrolipoamide acetyltransferase (E2) and lipoamide dehydrogenase (E3). In Oryza sativa subsp. japonica (Rice), this protein is Pyruvate dehydrogenase E1 component subunit beta-3, chloroplastic.